The chain runs to 666 residues: Semaphorin-7A (666 aa).

A disordered region spans residues 1-21 (MTPPPPGRAAPSAPRARVPGP). The first 44 residues, 1 to 44 (MTPPPPGRAAPSAPRARVPGPPARLGLPLRLRLLLLLWAAAASA), serve as a signal peptide directing secretion. Low complexity predominate over residues 9-21 (AAPSAPRARVPGP). In terms of domain architecture, Sema spans 53 to 490 (RIFAVWKGHV…SQWEVSQVPL (438 aa)). N-linked (GlcNAc...) asparagine glycosylation is present at Asn105. Cys120 and Cys126 are joined by a disulfide. An Asymmetric dimethylarginine modification is found at Arg135. Cys143 and Cys152 are disulfide-bonded. N-linked (GlcNAc...) asparagine glycosylation is found at Asn157 and Asn258. Cystine bridges form between Cys266-Cys366, Cys291-Cys335, Cys493-Cys511, Cys500-Cys541, Cys503-Cys518, Cys566-Cys613, and Cys587-Cys596. The tract at residues 267–269 (RGD) is interaction with integrins. A Cell attachment site motif is present at residues 267 to 269 (RGD). Asn330 carries an N-linked (GlcNAc...) asparagine glycan. The 86-residue stretch at 544 to 629 (PKPDKAPLQK…YFREAQHWQL (86 aa)) folds into the Ig-like C2-type domain. Asn602 carries an N-linked (GlcNAc...) asparagine glycan. Ala648 carries GPI-anchor amidated alanine lipidation. Residues 649–666 (ASLWLGVLPTLTLGLLVH) constitute a propeptide, removed in mature form.

It belongs to the semaphorin family. Interacts with ITGA1 and ITGB1. Interacts with PLXNC1. In terms of tissue distribution, detected in skin keratinocytes and on endothelial cells from skin blood vessels (at protein level). Expressed in fibroblasts, keratinocytes, melanocytes, placenta, testis, ovary, spleen, brain, spinal cord, lung, heart, adrenal gland, lymph nodes, thymus, intestine and kidney.

Its subcellular location is the cell membrane. Plays an important role in integrin-mediated signaling and functions both in regulating cell migration and immune responses. Promotes formation of focal adhesion complexes, activation of the protein kinase PTK2/FAK1 and subsequent phosphorylation of MAPK1 and MAPK3. Promotes production of pro-inflammatory cytokines by monocytes and macrophages. Plays an important role in modulating inflammation and T-cell-mediated immune responses. Promotes axon growth in the embryonic olfactory bulb. Promotes attachment, spreading and dendrite outgrowth in melanocytes. The polypeptide is Semaphorin-7A (SEMA7A) (Homo sapiens (Human)).